Reading from the N-terminus, the 434-residue chain is D-amino acid dehydrogenase (434 aa).

Residue 3-17 (VIILGGGVIGVTSAW) participates in FAD binding.

The protein belongs to the DadA oxidoreductase family. FAD is required as a cofactor.

The enzyme catalyses a D-alpha-amino acid + A + H2O = a 2-oxocarboxylate + AH2 + NH4(+). Its pathway is amino-acid degradation; D-alanine degradation; NH(3) and pyruvate from D-alanine: step 1/1. In terms of biological role, oxidative deamination of D-amino acids. This chain is D-amino acid dehydrogenase, found in Proteus mirabilis (strain HI4320).